The primary structure comprises 436 residues: ATP-dependent protease ATPase subunit HslU (436 aa).

Residues Ile18, Gly60 to Glu65, Asp250, Glu314, and Arg386 contribute to the ATP site.

It belongs to the ClpX chaperone family. HslU subfamily. A double ring-shaped homohexamer of HslV is capped on each side by a ring-shaped HslU homohexamer. The assembly of the HslU/HslV complex is dependent on binding of ATP.

The protein resides in the cytoplasm. Functionally, ATPase subunit of a proteasome-like degradation complex; this subunit has chaperone activity. The binding of ATP and its subsequent hydrolysis by HslU are essential for unfolding of protein substrates subsequently hydrolyzed by HslV. HslU recognizes the N-terminal part of its protein substrates and unfolds these before they are guided to HslV for hydrolysis. This Mesorhizobium japonicum (strain LMG 29417 / CECT 9101 / MAFF 303099) (Mesorhizobium loti (strain MAFF 303099)) protein is ATP-dependent protease ATPase subunit HslU.